The sequence spans 64 residues: Prokaryotic ubiquitin-like protein Pup (64 aa).

Residues 1–32 are disordered; that stretch reads MNAKQTQIMGGGGRDEDNAEDSAQASGQVQIN. Positions 20–58 are ARC ATPase binding; that stretch reads EDSAQASGQVQINTEGVDSLLDEIDGLLENNAEEFVRSY. Polar residues predominate over residues 21–32; the sequence is DSAQASGQVQIN. Residue Glu-64 forms an Isoglutamyl lysine isopeptide (Glu-Lys) (interchain with K-? in acceptor proteins) linkage.

Belongs to the prokaryotic ubiquitin-like protein family. In terms of assembly, strongly interacts with the proteasome-associated ATPase ARC through a hydrophobic interface; the interacting region of Pup lies in its C-terminal half. There is one Pup binding site per ARC hexamer ring.

Its pathway is protein degradation; proteasomal Pup-dependent pathway. Functionally, protein modifier that is covalently attached to lysine residues of substrate proteins, thereby targeting them for proteasomal degradation. The tagging system is termed pupylation. The chain is Prokaryotic ubiquitin-like protein Pup from Corynebacterium glutamicum (strain R).